The sequence spans 210 residues: Probable GTP-binding protein EngB (210 aa).

Positions 25–199 (CGIEVAFAGR…RQKLDSWFSE (175 aa)) constitute an EngB-type G domain. GTP contacts are provided by residues 33–40 (GRSNAGKS), 60–64 (GRTQL), 78–81 (DLPG), 145–148 (TKAD), and 178–180 (FSS). Residues S40 and T62 each contribute to the Mg(2+) site.

The protein belongs to the TRAFAC class TrmE-Era-EngA-EngB-Septin-like GTPase superfamily. EngB GTPase family. Requires Mg(2+) as cofactor.

In terms of biological role, necessary for normal cell division and for the maintenance of normal septation. The polypeptide is Probable GTP-binding protein EngB (Salmonella dublin (strain CT_02021853)).